A 216-amino-acid polypeptide reads, in one-letter code: Glycerol-3-phosphate acyltransferase 3 (216 aa).

Transmembrane regions (helical) follow at residues 6-26 (LLLV…YLVS), 58-78 (LVAA…GLVI), 92-112 (ILFA…WPVF), 125-145 (FGGM…VLII), and 158-178 (ITGV…SGFP).

The protein belongs to the PlsY family. In terms of assembly, probably interacts with PlsX.

Its subcellular location is the cell membrane. The catalysed reaction is an acyl phosphate + sn-glycerol 3-phosphate = a 1-acyl-sn-glycero-3-phosphate + phosphate. It functions in the pathway lipid metabolism; phospholipid metabolism. In terms of biological role, catalyzes the transfer of an acyl group from acyl-phosphate (acyl-PO(4)) to glycerol-3-phosphate (G3P) to form lysophosphatidic acid (LPA). This enzyme utilizes acyl-phosphate as fatty acyl donor, but not acyl-CoA or acyl-ACP. This is Glycerol-3-phosphate acyltransferase 3 from Dehalococcoides mccartyi (strain ATCC BAA-2266 / KCTC 15142 / 195) (Dehalococcoides ethenogenes (strain 195)).